We begin with the raw amino-acid sequence, 223 residues long: Endonuclease III (223 aa).

Residues 118–137 enclose the HhH domain; that stretch reads RDFLTAIEGIGDKTADVVLL. Positions 198, 205, 208, and 214 each coordinate [4Fe-4S] cluster.

Belongs to the Nth/MutY family. It depends on [4Fe-4S] cluster as a cofactor.

The catalysed reaction is 2'-deoxyribonucleotide-(2'-deoxyribose 5'-phosphate)-2'-deoxyribonucleotide-DNA = a 3'-end 2'-deoxyribonucleotide-(2,3-dehydro-2,3-deoxyribose 5'-phosphate)-DNA + a 5'-end 5'-phospho-2'-deoxyribonucleoside-DNA + H(+). Functionally, probably part of a 4-gene DNA damage response locus in which the upstream ups system, in combination with this downstream locus, functions in homologous recombination to rescue Sulfolobales from DNA-damaging threats. DNA repair enzyme that has both DNA N-glycosylase activity and AP-lyase activity. The DNA N-glycosylase activity releases various damaged pyrimidines from DNA by cleaving the N-glycosidic bond, leaving an AP (apurinic/apyrimidinic) site. The AP-lyase activity cleaves the phosphodiester bond 3' to the AP site by a beta-elimination, leaving a 3'-terminal unsaturated sugar and a product with a terminal 5'-phosphate. Nicks UV-treated plasmid DNA in a dose-dependent manner, has no activity on untreated DNA. The protein is Endonuclease III of Sulfolobus acidocaldarius (strain ATCC 33909 / DSM 639 / JCM 8929 / NBRC 15157 / NCIMB 11770).